A 260-amino-acid polypeptide reads, in one-letter code: Carbonic anhydrase 2 (260 aa).

Ser-2 carries the N-acetylserine modification. Residue Ser-2 is modified to Phosphoserine. The Alpha-carbonic anhydrase domain maps to 3–259 (HHWGYGEHNG…LKNRQVRVFP (257 aa)). The active-site Proton donor/acceptor is His-64. Zn(2+) is bound by residues His-94, His-96, and His-119. Phosphoserine is present on residues Ser-165 and Ser-172. A substrate-binding site is contributed by 198-199 (TN).

This sequence belongs to the alpha-carbonic anhydrase family. As to quaternary structure, interacts with SLC4A4 and SLC26A6. Interaction with SLC4A7 regulates SLC4A7 transporter activity. Zn(2+) serves as cofactor.

The protein localises to the cytoplasm. It is found in the cell membrane. It carries out the reaction hydrogencarbonate + H(+) = CO2 + H2O. It catalyses the reaction urea = cyanamide + H2O. Inhibited by acetazolamide. Its function is as follows. Catalyzes the reversible hydration of carbon dioxide. Can also hydrate cyanamide to urea. Involved in the regulation of fluid secretion into the anterior chamber of the eye. Essential for bone resorption and osteoclast differentiation. Contributes to intracellular pH regulation in the duodenal upper villous epithelium during proton-coupled peptide absorption. Stimulates the chloride-bicarbonate exchange activity of SLC26A6. The polypeptide is Carbonic anhydrase 2 (CA2) (Ovis aries (Sheep)).